The chain runs to 224 residues: Protein DEHYDRATION-INDUCED 19 homolog 4 (224 aa).

Over residues 1 to 12 (MDSNWINCPSVF) the composition is skewed to polar residues. Positions 1–23 (MDSNWINCPSVFSSSSSSSRRCQ) are disordered. The segment covering 13 to 23 (SSSSSSSRRCQ) has biased composition (low complexity). Position 117 is a phosphothreonine (Thr117).

This sequence belongs to the Di19 family. Phosphorylated in vitro by CPK3 or CPK11. As to expression, expressed in seedlings, roots, leaves, stems, flowers and siliques.

The protein localises to the cytoplasm. It localises to the perinuclear region. The sequence is that of Protein DEHYDRATION-INDUCED 19 homolog 4 (DI19-4) from Arabidopsis thaliana (Mouse-ear cress).